The primary structure comprises 555 residues: MAAAGAAATHLEVARGKRAALFFAAVAIVLGLPLWWKTTETYRASLPYSQISGLNALQLRLMVPVTVVFTRESVPLDDQEKLPFTVVHEREIPLKYKMKIKCRFQKAYRRALDHEEEALSSGSVQEAEAMLDEPQEQAEGSLTVYVISEHSSLLPQDMMSYIGPKRTAVVRGIMHREAFNIIGRRIVQVAQAMSLTEDVLAAALADHLPEDKWSAEKRRPLKSSLGYEITFSLLNPDPKSHDVYWDIEGAVRRYVQPFLNALGAAGNFSVDSQILYYAMLGVNPRFDSASSSYYLDMHSLPHVINPVESRLGSSAASLYPVLNFLLYVPELAHSPLYIQDKDGAPVATNAFHSPRWGGIMVYNVDSKTYNASVLPVRVEVDMVRVMEVFLAQLRLLFGIAQPQLPPKCLLSGPTSEGLMTWELDRLLWARSVENLATATTTLTSLAQLLGKISNIVIKDDVASEVYKAVAAVQKSAEELASGHLASAFVASQEAVTSSELAFFDPSLLHLLYFPDDQKFAIYIPLFLPMAVPILLSLVKIFLETRKSWRKPEKTD.

Topologically, residues 2–18 are cytoplasmic; the sequence is AAAGAAATHLEVARGKR. A cardiolipin contacts are provided by arginine 15 and arginine 18. Residues 19-39 traverse the membrane as a helical segment; the sequence is AALFFAAVAIVLGLPLWWKTT. At 40–517 the chain is on the lumenal side; the sequence is ETYRASLPYS…LHLLYFPDDQ (478 aa). 2 N-linked (GlcNAc...) asparagine glycosylation sites follow: asparagine 267 and asparagine 370. Residues 518–532 traverse the membrane as a helical segment; that stretch reads KFAIYIPLFLPMAVP. Over 533 to 555 the chain is Cytoplasmic; it reads ILLSLVKIFLETRKSWRKPEKTD.

It belongs to the PIGS family. As to quaternary structure, heteropentamer. Part of the GPI-anchor transamidase complex, consisting of PIGK, PIGT, PIGS, PIGU and GAA1.

The protein resides in the endoplasmic reticulum membrane. It functions in the pathway glycolipid biosynthesis; glycosylphosphatidylinositol-anchor biosynthesis. In terms of biological role, component of the glycosylphosphatidylinositol-anchor (GPI-anchor) transamidase (GPI-T) complex that catalyzes the formation of the linkage between a proprotein and a GPI-anchor and participates in GPI anchored protein biosynthesis. In Homo sapiens (Human), this protein is GPI-anchor transamidase component PIGS.